The following is a 232-amino-acid chain: Orotidine 5'-phosphate decarboxylase (232 aa).

Substrate is bound by residues D13, K35, 62 to 71, T121, R182, Q191, G211, and R212; that span reads DLKFHDIPNT. Residue K64 is the Proton donor of the active site.

It belongs to the OMP decarboxylase family. Type 1 subfamily. In terms of assembly, homodimer.

The catalysed reaction is orotidine 5'-phosphate + H(+) = UMP + CO2. The protein operates within pyrimidine metabolism; UMP biosynthesis via de novo pathway; UMP from orotate: step 2/2. Catalyzes the decarboxylation of orotidine 5'-monophosphate (OMP) to uridine 5'-monophosphate (UMP). This is Orotidine 5'-phosphate decarboxylase from Acinetobacter baumannii (strain AB0057).